Consider the following 504-residue polypeptide: Maturase K (504 aa).

The protein belongs to the intron maturase 2 family. MatK subfamily.

The protein localises to the plastid. Its subcellular location is the chloroplast. Functionally, usually encoded in the trnK tRNA gene intron. Probably assists in splicing its own and other chloroplast group II introns. The sequence is that of Maturase K from Arabidopsis halleri.